A 215-amino-acid polypeptide reads, in one-letter code: Small ribosomal subunit protein uS5 (215 aa).

The tract at residues 1–62 (MTDSSPQSNP…QERDSEWQER (62 aa)) is disordered. Low complexity predominate over residues 9-28 (NPNAVPGAADVPAAAEGQQQ). Residues 29 to 61 (EQRRGGGRGERGDRRGGRRGDRRNQERDSEWQE) show a composition bias toward basic and acidic residues. The 64-residue stretch at 59-122 (WQERVVQIRR…ADGKKHLVKV (64 aa)) folds into the S5 DRBM domain.

Belongs to the universal ribosomal protein uS5 family. Part of the 30S ribosomal subunit. Contacts proteins S4 and S8.

In terms of biological role, with S4 and S12 plays an important role in translational accuracy. Functionally, located at the back of the 30S subunit body where it stabilizes the conformation of the head with respect to the body. This Parasynechococcus marenigrum (strain WH8102) protein is Small ribosomal subunit protein uS5.